Reading from the N-terminus, the 503-residue chain is Glutamate--tRNA ligase (503 aa).

The 'HIGH' region signature appears at 26–36 (PSPTGTPHVGL). A disordered region spans residues 126–148 (TPEEVEARHRAAGRDPKLGYDNA). Residues 130–148 (VEARHRAAGRDPKLGYDNA) show a composition bias toward basic and acidic residues. A 'KMSKS' region motif is present at residues 270 to 274 (KLSKR). Lysine 273 is a binding site for ATP.

This sequence belongs to the class-I aminoacyl-tRNA synthetase family. Glutamate--tRNA ligase type 1 subfamily. In terms of assembly, monomer.

It is found in the cytoplasm. It catalyses the reaction tRNA(Glu) + L-glutamate + ATP = L-glutamyl-tRNA(Glu) + AMP + diphosphate. In terms of biological role, catalyzes the attachment of glutamate to tRNA(Glu) in a two-step reaction: glutamate is first activated by ATP to form Glu-AMP and then transferred to the acceptor end of tRNA(Glu). The protein is Glutamate--tRNA ligase of Saccharopolyspora erythraea (strain ATCC 11635 / DSM 40517 / JCM 4748 / NBRC 13426 / NCIMB 8594 / NRRL 2338).